Consider the following 936-residue polypeptide: UPF0746 protein DDB_G0280787 (936 aa).

A compositionally biased stretch (basic and acidic residues) spans 1-19; the sequence is MISNKRKEIDTIDGHHEKD. A disordered region spans residues 1 to 30; sequence MISNKRKEIDTIDGHHEKDNDDDDSDGIDN. An SAP domain is found at 44–78; that stretch reads SGSTNYRELQIIAKSLGLASNGKKQLVYNRIEGYF. Residues 91–110 are disordered; sequence ETNQQEEKKEEEQQQPQPQE.

Belongs to the UPF0746 family.

The protein is UPF0746 protein DDB_G0280787 of Dictyostelium discoideum (Social amoeba).